Consider the following 63-residue polypeptide: Protein DsrB (63 aa).

Belongs to the DsrB family.

The protein is Protein DsrB of Yersinia pseudotuberculosis serotype O:3 (strain YPIII).